Here is a 483-residue protein sequence, read N- to C-terminus: Regulatory protein ViaA (483 aa).

This sequence belongs to the ViaA family. Homodimer. Interacts with RavA.

Its subcellular location is the cytoplasm. Its function is as follows. Component of the RavA-ViaA chaperone complex, which may act on the membrane to optimize the function of some of the respiratory chains. ViaA stimulates the ATPase activity of RavA. The chain is Regulatory protein ViaA from Escherichia coli O7:K1 (strain IAI39 / ExPEC).